The sequence spans 220 residues: Protein LURP-one-related 12 (220 aa).

Belongs to the LOR family.

In terms of biological role, might be related to the phospholipid scramblase and tubby-like superfamily of membrane tethered transcription factors. The sequence is that of Protein LURP-one-related 12 from Arabidopsis thaliana (Mouse-ear cress).